A 477-amino-acid polypeptide reads, in one-letter code: MFKNVFSSLQKVGKSLMLPVSVLPIAGILLGIGSAHFTLIPEIISQIMAQTGGSIFSNMPLIFAIGVALGFSNNDGVAALAAVVAYSILIQTLSAVELNILNTDANTIKNKNFSDIGILGGIIAGAISAYMFNKFYKIQLPEYLGFFAGKRFVPIISGLFAIFVGLILSLIWPSIGNKIQIFSEWAAYQNPIIAFSLYGLVERALVPFGLHHIWNVPFQMQIGEYKNSIGQIFHGDIARYMAGDTTAGNLSGGFIFKMYGLPGAALAIWHTAKKENRKKIGSIMISAALTAFLTGITEPIEFSFILVAPILYIIHAILAGLSFPLCIFLNMRAGTSFSHGFIDFIVLSGHSHKIFLFPIVGICYGLLYYSIFYFLITTFNLKTPGREENKNTVFFRNNIEIAPYIVEALGGKNNIKNLDACITRLRITVSEISKVNEENLKNLGAAGVVISGSGVQAVFGTRSENIKTAIDEYINNI.

The PTS EIIC type-1 domain maps to 1-388 (MFKNVFSSLQ…FNLKTPGREE (388 aa)). Transmembrane regions (helical) follow at residues 20–40 (VSVLPIAGILLGIGSAHFTLI), 51–71 (TGGSIFSNMPLIFAIGVALGF), 76–96 (GVAALAAVVAYSILIQTLSAV), 112–132 (NFSDIGILGGIIAGAISAYMF), 152–172 (FVPIISGLFAIFVGLILSLIW), 250–270 (LSGGFIFKMYGLPGAALAIWH), 280–300 (IGSIMISAALTAFLTGITEPI), 304–324 (FILVAPILYIIHAILAGLSFP), and 354–374 (IFLFPIVGICYGLLYYSIFYF). Positions 399 to 477 (IEIAPYIVEA…TAIDEYINNI (79 aa)) constitute a PTS EIIB type-1 domain. Residue Cys-421 is the Phosphocysteine intermediate; for EIIB activity of the active site. Phosphocysteine is present on Cys-421.

It localises to the cell inner membrane. It catalyses the reaction N(pros)-phospho-L-histidyl-[protein] + D-glucose(out) = D-glucose 6-phosphate(in) + L-histidyl-[protein]. Its function is as follows. The phosphoenolpyruvate-dependent sugar phosphotransferase system (sugar PTS), a major carbohydrate active transport system, catalyzes the phosphorylation of incoming sugar substrates concomitantly with their translocation across the cell membrane. The enzyme II complex composed of PtsG and Crr is involved in glucose transport. This is PTS system glucose-specific EIICB component (ptsG) from Buchnera aphidicola subsp. Schizaphis graminum (strain Sg).